A 239-amino-acid chain; its full sequence is Pyridoxine 5'-phosphate synthase (239 aa).

Asn-7 is a binding site for 3-amino-2-oxopropyl phosphate. Asp-9 to His-10 serves as a coordination point for 1-deoxy-D-xylulose 5-phosphate. Arg-18 lines the 3-amino-2-oxopropyl phosphate pocket. His-43 (proton acceptor) is an active-site residue. 1-deoxy-D-xylulose 5-phosphate contacts are provided by Arg-45 and His-50. Glu-70 functions as the Proton acceptor in the catalytic mechanism. Residue Thr-100 coordinates 1-deoxy-D-xylulose 5-phosphate. The active-site Proton donor is the His-191. Residues Gly-192 and Gly-213 to His-214 each bind 3-amino-2-oxopropyl phosphate.

This sequence belongs to the PNP synthase family. Homooctamer; tetramer of dimers.

Its subcellular location is the cytoplasm. It carries out the reaction 3-amino-2-oxopropyl phosphate + 1-deoxy-D-xylulose 5-phosphate = pyridoxine 5'-phosphate + phosphate + 2 H2O + H(+). The protein operates within cofactor biosynthesis; pyridoxine 5'-phosphate biosynthesis; pyridoxine 5'-phosphate from D-erythrose 4-phosphate: step 5/5. Catalyzes the complicated ring closure reaction between the two acyclic compounds 1-deoxy-D-xylulose-5-phosphate (DXP) and 3-amino-2-oxopropyl phosphate (1-amino-acetone-3-phosphate or AAP) to form pyridoxine 5'-phosphate (PNP) and inorganic phosphate. The sequence is that of Pyridoxine 5'-phosphate synthase from Geotalea daltonii (strain DSM 22248 / JCM 15807 / FRC-32) (Geobacter daltonii).